Reading from the N-terminus, the 60-residue chain is Ribosome biogenesis protein Nop10 (60 aa).

The tract at residues 29–60 (CDGPTENSAPAPFSPEDPYGEYRRRVRRRASE) is disordered.

The protein belongs to the NOP10 family.

Functionally, involved in ribosome biogenesis; more specifically in 18S rRNA pseudouridylation and in cleavage of pre-rRNA. This is Ribosome biogenesis protein Nop10 from Halorubrum lacusprofundi (strain ATCC 49239 / DSM 5036 / JCM 8891 / ACAM 34).